Reading from the N-terminus, the 211-residue chain is Leucyl/phenylalanyl-tRNA--protein transferase (211 aa).

Belongs to the L/F-transferase family.

It is found in the cytoplasm. The enzyme catalyses N-terminal L-lysyl-[protein] + L-leucyl-tRNA(Leu) = N-terminal L-leucyl-L-lysyl-[protein] + tRNA(Leu) + H(+). It carries out the reaction N-terminal L-arginyl-[protein] + L-leucyl-tRNA(Leu) = N-terminal L-leucyl-L-arginyl-[protein] + tRNA(Leu) + H(+). The catalysed reaction is L-phenylalanyl-tRNA(Phe) + an N-terminal L-alpha-aminoacyl-[protein] = an N-terminal L-phenylalanyl-L-alpha-aminoacyl-[protein] + tRNA(Phe). Functionally, functions in the N-end rule pathway of protein degradation where it conjugates Leu, Phe and, less efficiently, Met from aminoacyl-tRNAs to the N-termini of proteins containing an N-terminal arginine or lysine. This is Leucyl/phenylalanyl-tRNA--protein transferase from Flavobacterium psychrophilum (strain ATCC 49511 / DSM 21280 / CIP 103535 / JIP02/86).